The sequence spans 208 residues: Regulator of G-protein signaling 4 (208 aa).

Residues C2, C12, and C95 are each lipidated (S-palmitoyl cysteine). Residues 62-178 (SLENLIHHDR…LKSPYLDLVS (117 aa)) enclose the RGS domain.

In terms of processing, palmitoylated on Cys-2 and/or Cys-12. Phosphorylated by cyclic GMP-dependent protein kinase. As to expression, expressed in the developing nervous system.

In terms of biological role, inhibits signal transduction by increasing the GTPase activity of G protein alpha subunits thereby driving them into their inactive GDP-bound form. Activity on G(z)-alpha is inhibited by phosphorylation of the G-protein. Activity on G(z)-alpha and G(i)-alpha-1 is inhibited by palmitoylation of the G-protein. This chain is Regulator of G-protein signaling 4 (RGS4), found in Gallus gallus (Chicken).